The chain runs to 87 residues: Small ribosomal subunit protein uS17 (87 aa).

It belongs to the universal ribosomal protein uS17 family. As to quaternary structure, part of the 30S ribosomal subunit.

One of the primary rRNA binding proteins, it binds specifically to the 5'-end of 16S ribosomal RNA. In Geobacillus kaustophilus (strain HTA426), this protein is Small ribosomal subunit protein uS17.